We begin with the raw amino-acid sequence, 64 residues long: Large ribosomal subunit protein uL29 (64 aa).

The protein belongs to the universal ribosomal protein uL29 family.

The sequence is that of Large ribosomal subunit protein uL29 from Paraburkholderia phytofirmans (strain DSM 17436 / LMG 22146 / PsJN) (Burkholderia phytofirmans).